Reading from the N-terminus, the 401-residue chain is Carboxybiotin decarboxylase (401 aa).

The next 10 helical transmembrane spans lie at 20 to 40 (VISI…YFGF), 46 to 66 (PLIM…VLFL), 70 to 90 (VVGT…VNLM), 107 to 127 (LIAC…FILI), 131 to 151 (ASII…IIGI), 173 to 193 (MVLF…AIIA), 244 to 264 (LCLL…GIAI), 275 to 295 (LLET…LGAL), 306 to 326 (ISLI…GGVL), and 380 to 400 (VCGL…LFLL).

It localises to the cell membrane. It carries out the reaction N(6)-carboxybiotinyl-L-lysyl-[protein] + n Na(+)(in) + H(+) = N(6)-biotinyl-L-lysyl-[protein] + n Na(+)(out) + CO2. In terms of biological role, beta subunit of the biotin-dependent malonate decarboxylase multienzyme complex (EC 7.2.4.4). Acts as an integral membrane-bound carboxybiotin protein decarboxylase by releasing the carboxyl group of the carboxylated biotin carrier MADF. The free energy of the decarboxylation reaction is used to pump Na(+) out of the cell. The chain is Carboxybiotin decarboxylase (madB) from Malonomonas rubra.